The following is a 217-amino-acid chain: Probable transaldolase (217 aa).

The Schiff-base intermediate with substrate role is filled by Lys83.

This sequence belongs to the transaldolase family. Type 3B subfamily.

It localises to the cytoplasm. It catalyses the reaction D-sedoheptulose 7-phosphate + D-glyceraldehyde 3-phosphate = D-erythrose 4-phosphate + beta-D-fructose 6-phosphate. Its pathway is carbohydrate degradation; pentose phosphate pathway; D-glyceraldehyde 3-phosphate and beta-D-fructose 6-phosphate from D-ribose 5-phosphate and D-xylulose 5-phosphate (non-oxidative stage): step 2/3. Its function is as follows. Transaldolase is important for the balance of metabolites in the pentose-phosphate pathway. This chain is Probable transaldolase, found in Clostridium botulinum (strain Loch Maree / Type A3).